Reading from the N-terminus, the 93-residue chain is Small ribosomal subunit protein uS19 (93 aa).

It belongs to the universal ribosomal protein uS19 family.

In terms of biological role, protein S19 forms a complex with S13 that binds strongly to the 16S ribosomal RNA. In Nitratidesulfovibrio vulgaris (strain DSM 19637 / Miyazaki F) (Desulfovibrio vulgaris), this protein is Small ribosomal subunit protein uS19.